The sequence spans 306 residues: UDP-3-O-acyl-N-acetylglucosamine deacetylase (306 aa).

Zn(2+) contacts are provided by H79, H238, and D242. H265 serves as the catalytic Proton donor.

It belongs to the LpxC family. It depends on Zn(2+) as a cofactor.

It catalyses the reaction a UDP-3-O-[(3R)-3-hydroxyacyl]-N-acetyl-alpha-D-glucosamine + H2O = a UDP-3-O-[(3R)-3-hydroxyacyl]-alpha-D-glucosamine + acetate. Its pathway is glycolipid biosynthesis; lipid IV(A) biosynthesis; lipid IV(A) from (3R)-3-hydroxytetradecanoyl-[acyl-carrier-protein] and UDP-N-acetyl-alpha-D-glucosamine: step 2/6. Catalyzes the hydrolysis of UDP-3-O-myristoyl-N-acetylglucosamine to form UDP-3-O-myristoylglucosamine and acetate, the committed step in lipid A biosynthesis. The sequence is that of UDP-3-O-acyl-N-acetylglucosamine deacetylase from Shewanella loihica (strain ATCC BAA-1088 / PV-4).